Here is a 203-residue protein sequence, read N- to C-terminus: Holliday junction branch migration complex subunit RuvA (203 aa).

Residues Met1–Leu63 are domain I. The tract at residues Ser64 to Lys142 is domain II. The segment at Asp143–Gly149 is flexible linker. Positions Ile150–Phe203 are domain III.

This sequence belongs to the RuvA family. In terms of assembly, homotetramer. Forms an RuvA(8)-RuvB(12)-Holliday junction (HJ) complex. HJ DNA is sandwiched between 2 RuvA tetramers; dsDNA enters through RuvA and exits via RuvB. An RuvB hexamer assembles on each DNA strand where it exits the tetramer. Each RuvB hexamer is contacted by two RuvA subunits (via domain III) on 2 adjacent RuvB subunits; this complex drives branch migration. In the full resolvosome a probable DNA-RuvA(4)-RuvB(12)-RuvC(2) complex forms which resolves the HJ.

It is found in the cytoplasm. In terms of biological role, the RuvA-RuvB-RuvC complex processes Holliday junction (HJ) DNA during genetic recombination and DNA repair, while the RuvA-RuvB complex plays an important role in the rescue of blocked DNA replication forks via replication fork reversal (RFR). RuvA specifically binds to HJ cruciform DNA, conferring on it an open structure. The RuvB hexamer acts as an ATP-dependent pump, pulling dsDNA into and through the RuvAB complex. HJ branch migration allows RuvC to scan DNA until it finds its consensus sequence, where it cleaves and resolves the cruciform DNA. The protein is Holliday junction branch migration complex subunit RuvA of Rickettsia bellii (strain OSU 85-389).